The primary structure comprises 666 residues: DNA-directed RNA polymerase III subunit rpc3 (666 aa).

Disordered regions lie at residues 130-153 (HEPHANGNSNETNGATNGNGVHSY) and 375-455 (SRLD…TESR). Over residues 135–153 (NGNSNETNGATNGNGVHSY) the composition is skewed to polar residues. The tract at residues 593-614 (TYKAMSRCLQRLDVEKRRKANI) is leucine-zipper.

It belongs to the RNA polymerase beta chain family. As to quaternary structure, component of the RNA polymerase III (Pol III) complex consisting of 17 subunits.

Its subcellular location is the nucleus. Its function is as follows. DNA-dependent RNA polymerase catalyzes the transcription of DNA into RNA using the four ribonucleoside triphosphates as substrates. Specific core component of RNA polymerase III which synthesizes small RNAs, such as 5S rRNA and tRNAs. In Botryotinia fuckeliana (strain B05.10) (Noble rot fungus), this protein is DNA-directed RNA polymerase III subunit rpc3 (rpc82).